A 212-amino-acid chain; its full sequence is Nuclear transcription factor Y subunit C-7 (212 aa).

A compositionally biased stretch (polar residues) spans 1 to 10; the sequence is MEENNGNNNH. Disordered stretches follow at residues 1-23 and 190-212; these read MEEN…LPPP and EWPA…SGGN.

This sequence belongs to the NFYC/HAP5 subunit family. Heterotrimeric transcription factor composed of three components, NF-YA, NF-YB and NF-YC. NF-YB and NF-YC must interact and dimerize for NF-YA association and DNA binding. As to expression, expressed in flowers.

It localises to the nucleus. Stimulates the transcription of various genes by recognizing and binding to a CCAAT motif in promoters. This is Nuclear transcription factor Y subunit C-7 (NFYC7) from Arabidopsis thaliana (Mouse-ear cress).